A 1073-amino-acid polypeptide reads, in one-letter code: MGFLLLWFCVLFLLVSRLRAVSFPEDDEPLNTVDYHYSRQYPVFRGRPSGNESQHRLDFQLMLKIRDTLYIAGRDQVYTVNLNEIPQTEVIPSKKLTWRSRQQDRENCAMKGKHKDECHNFIKVFVPRNDEMVFVCGTNAFNPMCRYYRLRTLEYDGEEISGLARCPFDARQTNVALFADGKLYSATVADFLASDAVIYRSMGDGSALRTIKYDSKWIKEPHFLHAIEYGNYVYFFFREIAVEHNNLGKAVYSRVARICKNDMGGSQRVLEKHWTSFLKARLNCSVPGDSFFYFDVLQSITDIIQINGIPTVVGVFTTQLNSIPGSAVCAFSMDDIEKVFKGRFKEQKTPDSVWTAVPEDKVPKPRPGCCAKHGLAEAYKTSIDFPDDTLAFIKSHPLMDSAVPPIADEPWFTKTRVRYRLTAIEVDRSAGPYQNYTVIFVGSEAGVVLKVLAKTSPFSLNDSVLLEEIEAYNPAKCSAESEEDRKVVSLQLDKDHHALYVAFSSCVVRIPLSRCERYGSCKKSCIASRDPYCGWLSQGVCERVTLGMLPGGYEQDTEYGNTAHLGDCHESLPPSTTPDYKIFGGPTSDMEVSSSSVTTVASSPEITSKVIDTWRPKLTSSRKFVVQDDPNTSDFTDTISGIPKGVRWEVQSGESNQMVHMNVLITCVFAAFVLGAFIAGVAVYCYRDMFVRKNRKIHKDAESAQSCTDSSGSFAKLNGLFDSPVKEYQQNIDSPKLYSNLLTSRKELPPNTDTKSMAVDHRGQPPELAALPTPESTPVLHQKTLQAMKSHSEKAHSHGASRKEHPQFFPSSPPPHSPLSHGHIPSAIVLPNATHDYNTSFSNSNAHKAEKKLQSMDHPLTKSSSKREHRRSVDSRNTLNDLLKHLNDPNSNPKAILGEIHMAHQTLMLDPVGPMAEVPPKVPNREASLYSPPSTLPRNSPTKRVDVPTTPGVPMTSLERQRGYHKNSSQRHSISAVPKNLNSPNGVLLSRQPSMNRGGYMPTPTGAKVDYIQGTPVSVHLQPSLSRQSSYTSNGTLPRTGLKRTPSLKPDVPPKPSFVPQTTSVRPLNKYTY.

Positions 1-20 are cleaved as a signal peptide; the sequence is MGFLLLWFCVLFLLVSRLRA. Over 21–662 the chain is Extracellular; it reads VSFPEDDEPL…GESNQMVHMN (642 aa). In terms of domain architecture, Sema spans 27-512; sequence DEPLNTVDYH…FSSCVVRIPL (486 aa). An N-linked (GlcNAc...) asparagine glycan is attached at asparagine 51. Disulfide bonds link cysteine 108–cysteine 118, cysteine 136–cysteine 145, cysteine 259–cysteine 370, and cysteine 284–cysteine 329. A glycan (N-linked (GlcNAc...) asparagine) is linked at asparagine 283. N-linked (GlcNAc...) asparagine glycosylation is found at asparagine 435 and asparagine 461. 4 disulfides stabilise this stretch: cysteine 477/cysteine 506, cysteine 515/cysteine 533, cysteine 521/cysteine 568, and cysteine 525/cysteine 541. A PSI domain is found at 514-569; that stretch reads RCERYGSCKKSCIASRDPYCGWLSQGVCERVTLGMLPGGYEQDTEYGNTAHLGDCH. Asparagine 631 is a glycosylation site (N-linked (GlcNAc...) asparagine). The chain crosses the membrane as a helical span at residues 663 to 683; it reads VLITCVFAAFVLGAFIAGVAV. Residues 684–1073 are Cytoplasmic-facing; it reads YCYRDMFVRK…SVRPLNKYTY (390 aa). Residues serine 723, serine 734, and serine 744 each carry the phosphoserine modification. Disordered regions lie at residues 745 to 825, 839 to 876, 919 to 986, and 1021 to 1073; these read RKEL…GHIP, TSFS…VDSR, PPKV…SPNG, and LQPS…KYTY. Threonine 773 bears the Phosphothreonine mark. Residues 790–806 show a composition bias toward basic and acidic residues; it reads SHSEKAHSHGASRKEHP. Phosphoserine is present on residues serine 931, serine 957, and serine 983. Residues 931 to 942 are compositionally biased toward polar residues; sequence SPPSTLPRNSPT. 2 stretches are compositionally biased toward polar residues: residues 1021 to 1037 and 1059 to 1073; these read LQPS…NGTL and VPQT…KYTY.

It belongs to the semaphorin family. Expressed in brain and lung.

Its subcellular location is the cell membrane. Its function is as follows. Shows growth cone collapsing activity on dorsal root ganglion (DRG) neurons in vitro. May be a stop signal for the DRG neurons in their target areas, and possibly also for other neurons. May also be involved in the maintenance and remodeling of neuronal connections. Ligand of TREM2 with PLXNA1 as coreceptor in dendritic cells, plays a role in the generation of immune responses and skeletal homeostasis. This Mus musculus (Mouse) protein is Semaphorin-6D (Sema6d).